The following is a 142-amino-acid chain: Large ribosomal subunit protein bL21 (142 aa).

The segment covering Arg-74–Gly-84 has biased composition (basic residues). A disordered region spans residues Arg-74–Glu-142. Residues Lys-107–Lys-125 are compositionally biased toward basic and acidic residues. The segment covering Pro-126–Ala-135 has biased composition (basic residues).

This sequence belongs to the bacterial ribosomal protein bL21 family. In terms of assembly, part of the 50S ribosomal subunit. Contacts protein L20.

Its function is as follows. This protein binds to 23S rRNA in the presence of protein L20. The sequence is that of Large ribosomal subunit protein bL21 from Brucella melitensis biotype 2 (strain ATCC 23457).